A 66-amino-acid chain; its full sequence is Cytochrome b-c1 complex subunit 9, mitochondrial (66 aa).

Topologically, residues 2–17 are mitochondrial matrix; it reads SFSSLYKTFFKRNAVF. A helical transmembrane segment spans residues 18-43; sequence VGTIFAGAFVFQTVFDTAITSWYENH. Residues 44-66 lie on the Mitochondrial intermembrane side of the membrane; the sequence is NKGKLWKDVKARIAAGDGDDDDE.

It belongs to the UQCR10/QCR9 family. In terms of assembly, component of the ubiquinol-cytochrome c oxidoreductase (cytochrome b-c1 complex, complex III, CIII), a multisubunit enzyme composed of 10 subunits. The complex is composed of 3 respiratory subunits cytochrome b (COB), cytochrome c1 (CYT1) and Rieske protein (RIP1), 2 core protein subunits COR1 and QCR2, and 5 low-molecular weight protein subunits QCR6, QCR7, QCR8, QCR9 and QCR10. The complex exists as an obligatory dimer and forms supercomplexes (SCs) in the inner mitochondrial membrane with a monomer or a dimer of cytochrome c oxidase (complex IV, CIV), resulting in 2 different assemblies (supercomplexes III(2)IV and III(2)IV(2)). Interacts with the transmembrane segment of RIP1.

It localises to the mitochondrion inner membrane. In terms of biological role, component of the ubiquinol-cytochrome c oxidoreductase, a multisubunit transmembrane complex that is part of the mitochondrial electron transport chain which drives oxidative phosphorylation. The respiratory chain contains 3 multisubunit complexes succinate dehydrogenase (complex II, CII), ubiquinol-cytochrome c oxidoreductase (cytochrome b-c1 complex, complex III, CIII) and cytochrome c oxidase (complex IV, CIV), that cooperate to transfer electrons derived from NADH and succinate to molecular oxygen, creating an electrochemical gradient over the inner membrane that drives transmembrane transport and the ATP synthase. The cytochrome b-c1 complex catalyzes electron transfer from ubiquinol to cytochrome c, linking this redox reaction to translocation of protons across the mitochondrial inner membrane, with protons being carried across the membrane as hydrogens on the quinol. In the process called Q cycle, 2 protons are consumed from the matrix, 4 protons are released into the intermembrane space and 2 electrons are passed to cytochrome c. This Saccharomyces cerevisiae (strain ATCC 204508 / S288c) (Baker's yeast) protein is Cytochrome b-c1 complex subunit 9, mitochondrial (QCR9).